We begin with the raw amino-acid sequence, 252 residues long: 2-succinyl-6-hydroxy-2,4-cyclohexadiene-1-carboxylate synthase (252 aa).

Belongs to the AB hydrolase superfamily. MenH family. In terms of assembly, monomer.

It catalyses the reaction 5-enolpyruvoyl-6-hydroxy-2-succinyl-cyclohex-3-ene-1-carboxylate = (1R,6R)-6-hydroxy-2-succinyl-cyclohexa-2,4-diene-1-carboxylate + pyruvate. Its pathway is quinol/quinone metabolism; 1,4-dihydroxy-2-naphthoate biosynthesis; 1,4-dihydroxy-2-naphthoate from chorismate: step 3/7. It participates in quinol/quinone metabolism; menaquinone biosynthesis. Its function is as follows. Catalyzes a proton abstraction reaction that results in 2,5-elimination of pyruvate from 2-succinyl-5-enolpyruvyl-6-hydroxy-3-cyclohexene-1-carboxylate (SEPHCHC) and the formation of 2-succinyl-6-hydroxy-2,4-cyclohexadiene-1-carboxylate (SHCHC). The polypeptide is 2-succinyl-6-hydroxy-2,4-cyclohexadiene-1-carboxylate synthase (Salmonella choleraesuis (strain SC-B67)).